Consider the following 115-residue polypeptide: Large ribosomal subunit protein bL19 (115 aa).

This sequence belongs to the bacterial ribosomal protein bL19 family.

Functionally, this protein is located at the 30S-50S ribosomal subunit interface and may play a role in the structure and function of the aminoacyl-tRNA binding site. The chain is Large ribosomal subunit protein bL19 from Pectobacterium carotovorum subsp. carotovorum (strain PC1).